The following is a 306-amino-acid chain: Mediator of RNA polymerase II transcription subunit 30 (306 aa).

2 disordered regions span residues 1–22 (MSGQ…FNSP) and 51–148 (QQQM…STQA). A compositionally biased stretch (low complexity) spans 51–128 (QQQMQSGGVQ…VSSAAQSATG (78 aa)).

The protein belongs to the Mediator complex subunit 30 family. In terms of assembly, component of the Mediator complex.

It is found in the nucleus. Component of the Mediator complex, a coactivator involved in the regulated transcription of nearly all RNA polymerase II-dependent genes. Mediator functions as a bridge to convey information from gene-specific regulatory proteins to the basal RNA polymerase II transcription machinery. Mediator is recruited to promoters by direct interactions with regulatory proteins and serves as a scaffold for the assembly of a functional preinitiation complex with RNA polymerase II and the general transcription factors. This is Mediator of RNA polymerase II transcription subunit 30 (MED30) from Aedes aegypti (Yellowfever mosquito).